The primary structure comprises 349 residues: MGVQFSAAELTDLVGGELSGDPGRLVVGARPPEEAEGGDLTFALDLHARKLIETTRAGVAITPVRWPFEHLTQIVVANPRLAMAQVLAHMFPQPIAMPPAGIHPSAVVHPSAVVHPSASVAALVYVGPRAAVGANTHLFPGVYVGAEAVVGSECLIYPNVVLMDGIRLGDRVVIHAGSVLGSDGYGFVPTGERHLKVPQVGTVVIGDDVEVGANVAVDRATMGQTEIQAGTKIDNLVHIGHNDRIGRHCLIVSQVGLAGSVKVGDRTVIAGQAGVANQTTVGADCLVLARSGVTKDLPDHSKVSGFPAQDHLLELKQQAARSRLPQIVEQMRQMQRRIEQLEVQLLGRL.

Residue histidine 241 is the Proton acceptor of the active site.

Belongs to the transferase hexapeptide repeat family. LpxD subfamily. As to quaternary structure, homotrimer.

The catalysed reaction is a UDP-3-O-[(3R)-3-hydroxyacyl]-alpha-D-glucosamine + a (3R)-hydroxyacyl-[ACP] = a UDP-2-N,3-O-bis[(3R)-3-hydroxyacyl]-alpha-D-glucosamine + holo-[ACP] + H(+). The protein operates within bacterial outer membrane biogenesis; LPS lipid A biosynthesis. Functionally, catalyzes the N-acylation of UDP-3-O-acylglucosamine using 3-hydroxyacyl-ACP as the acyl donor. Is involved in the biosynthesis of lipid A, a phosphorylated glycolipid that anchors the lipopolysaccharide to the outer membrane of the cell. This is UDP-3-O-acylglucosamine N-acyltransferase 1 from Gloeobacter violaceus (strain ATCC 29082 / PCC 7421).